The primary structure comprises 528 residues: Glutamyl-tRNA(Gln) amidotransferase subunit A, mitochondrial (528 aa).

The Charge relay system role is filled by lysine 76. Positions 147–166 (QYREKRKQNPHSKNEDSDWL) are disordered. Serine 171 serves as the catalytic Charge relay system. Serine 195 functions as the Acyl-ester intermediate in the catalytic mechanism.

This sequence belongs to the amidase family. GatA subfamily. Subunit of the heterotrimeric GatCAB amidotransferase (AdT) complex, composed of A (QRSL1), B (GATB) and C (GATC) subunits.

It is found in the mitochondrion. The catalysed reaction is L-glutamyl-tRNA(Gln) + L-glutamine + ATP + H2O = L-glutaminyl-tRNA(Gln) + L-glutamate + ADP + phosphate + H(+). In terms of biological role, allows the formation of correctly charged Gln-tRNA(Gln) through the transamidation of misacylated Glu-tRNA(Gln) in the mitochondria. The reaction takes place in the presence of glutamine and ATP through an activated gamma-phospho-Glu-tRNA(Gln). The protein is Glutamyl-tRNA(Gln) amidotransferase subunit A, mitochondrial of Macaca fascicularis (Crab-eating macaque).